The sequence spans 430 residues: 3-phosphoshikimate 1-carboxyvinyltransferase (430 aa).

A disordered region spans residues 1–20 (MHATVSPSRVRGRARAPPSK). 3-phosphoshikimate-binding residues include Lys-20, Ser-21, and Arg-25. A phosphoenolpyruvate-binding site is contributed by Lys-20. Residues Gly-91 and Arg-119 each contribute to the phosphoenolpyruvate site. 3-phosphoshikimate contacts are provided by Ser-164, Ser-165, Gln-166, Ser-192, Asp-312, and Lys-339. Gln-166 is a binding site for phosphoenolpyruvate. Asp-312 (proton acceptor) is an active-site residue. Residues Arg-343 and Arg-386 each coordinate phosphoenolpyruvate.

Belongs to the EPSP synthase family. In terms of assembly, monomer.

It is found in the cytoplasm. The enzyme catalyses 3-phosphoshikimate + phosphoenolpyruvate = 5-O-(1-carboxyvinyl)-3-phosphoshikimate + phosphate. It participates in metabolic intermediate biosynthesis; chorismate biosynthesis. In terms of biological role, catalyzes the transfer of the enolpyruvyl moiety of phosphoenolpyruvate (PEP) to the 5-hydroxyl of shikimate-3-phosphate (S3P) to produce enolpyruvyl shikimate-3-phosphate and inorganic phosphate. The polypeptide is 3-phosphoshikimate 1-carboxyvinyltransferase (Halobacterium salinarum (strain ATCC 29341 / DSM 671 / R1)).